The primary structure comprises 636 residues: 1-phosphatidylinositol 4,5-bisphosphate phosphodiesterase zeta-1 (636 aa).

Residues 35-70 (CNTIHVKCIFKDNDRLKQGRITIEEFRTIYRIIAHR) enclose the EF-hand domain. Positions 155-299 (QDMTHPLSDY…LKFKILVRNK (145 aa)) constitute a PI-PLC X-box domain. Active-site residues include histidine 170 and histidine 215. The interval 311–338 (KGFDKHGQVQECEEEEEAEQEEEENEVR) is disordered. Residues 318-345 (QVQECEEEEEAEQEEEENEVRDSEILDI) adopt a coiled-coil conformation. Positions 321–336 (ECEEEEEAEQEEEENE) are enriched in acidic residues. Positions 375–491 (LSDLVIYTKV…GYILKPHFLR (117 aa)) constitute a PI-PLC Y-box domain. A C2 domain is found at 491 to 617 (RDGKSIFNPN…KGYRRVPLFS (127 aa)).

As to quaternary structure, interacts via its C2 domain with PtdIns(3)P and, to a lesser extent, PtdIns(5)P in vitro. The cofactor is Ca(2+). In terms of tissue distribution, expressed specifically in testis.

It is found in the nucleus. The protein resides in the cytoplasm. The protein localises to the perinuclear region. It catalyses the reaction a 1,2-diacyl-sn-glycero-3-phospho-(1D-myo-inositol-4,5-bisphosphate) + H2O = 1D-myo-inositol 1,4,5-trisphosphate + a 1,2-diacyl-sn-glycerol + H(+). Functionally, the production of the second messenger molecules diacylglycerol (DAG) and inositol 1,4,5-trisphosphate (IP3) is mediated by activated phosphatidylinositol-specific phospholipase C enzymes. In vitro, hydrolyzes PtdIns(4,5)P2 in a Ca(2+)-dependent manner. Triggers intracellular Ca(2+) oscillations in oocytes solely during M phase and is involved in inducing oocyte activation and initiating embryonic development up to the blastocyst stage. Is therefore a strong candidate for the egg-activating soluble sperm factor that is transferred from the sperm into the egg cytoplasm following gamete membrane fusion. May exert an inhibitory effect on phospholipase-C-coupled processes that depend on calcium ions and protein kinase C, including CFTR trafficking and function. The chain is 1-phosphatidylinositol 4,5-bisphosphate phosphodiesterase zeta-1 from Sus scrofa (Pig).